A 317-amino-acid polypeptide reads, in one-letter code: Porphobilinogen deaminase (317 aa).

Cys245 is subject to S-(dipyrrolylmethanemethyl)cysteine.

It belongs to the HMBS family. Monomer. It depends on dipyrromethane as a cofactor.

The catalysed reaction is 4 porphobilinogen + H2O = hydroxymethylbilane + 4 NH4(+). The protein operates within porphyrin-containing compound metabolism; protoporphyrin-IX biosynthesis; coproporphyrinogen-III from 5-aminolevulinate: step 2/4. It functions in the pathway porphyrin-containing compound metabolism; chlorophyll biosynthesis. Tetrapolymerization of the monopyrrole PBG into the hydroxymethylbilane pre-uroporphyrinogen in several discrete steps. This chain is Porphobilinogen deaminase, found in Synechococcus sp. (strain RCC307).